The sequence spans 493 residues: 3-octaprenyl-4-hydroxybenzoate carboxy-lyase (493 aa).

N172 contributes to the Mn(2+) binding site. Residues I175–R177, R189–L191, and R194–G195 contribute to the prenylated FMN site. Position 238 (E238) interacts with Mn(2+). D287 acts as the Proton donor in catalysis.

This sequence belongs to the UbiD family. Homohexamer. Prenylated FMN is required as a cofactor. The cofactor is Mn(2+).

Its subcellular location is the cell membrane. It catalyses the reaction a 4-hydroxy-3-(all-trans-polyprenyl)benzoate + H(+) = a 2-(all-trans-polyprenyl)phenol + CO2. The protein operates within cofactor biosynthesis; ubiquinone biosynthesis. Catalyzes the decarboxylation of 3-octaprenyl-4-hydroxy benzoate to 2-octaprenylphenol, an intermediate step in ubiquinone biosynthesis. This is 3-octaprenyl-4-hydroxybenzoate carboxy-lyase from Shewanella amazonensis (strain ATCC BAA-1098 / SB2B).